Here is a 164-residue protein sequence, read N- to C-terminus: Cyclic pyranopterin monophosphate synthase (164 aa).

Substrate-binding positions include 75-77 (MCH) and 116-117 (ME). Residue Asp-131 is part of the active site.

The protein belongs to the MoaC family. Homohexamer; trimer of dimers.

The enzyme catalyses (8S)-3',8-cyclo-7,8-dihydroguanosine 5'-triphosphate = cyclic pyranopterin phosphate + diphosphate. Its pathway is cofactor biosynthesis; molybdopterin biosynthesis. Its function is as follows. Catalyzes the conversion of (8S)-3',8-cyclo-7,8-dihydroguanosine 5'-triphosphate to cyclic pyranopterin monophosphate (cPMP). The chain is Cyclic pyranopterin monophosphate synthase from Staphylococcus aureus (strain USA300).